We begin with the raw amino-acid sequence, 124 residues long: MGSSSEASFRSAQASCSGARRQGLGRGDQNLSVMPPNGRAQTHTPGWVSDPLVLGAQVHGGCRGIEALSVSSGSWSSATVWILTGLGLGLSRPFLPGATVLRDRPLGSAFELSYDQKKAPLRLQ.

Residues M1 to C16 show a composition bias toward polar residues. The disordered stretch occupies residues M1–G46.

As to expression, only found to be expressed in thymus.

The protein resides in the mitochondrion. May play an important role in mediating p53/TP53-dependent apoptosis. The sequence is that of p53-regulated apoptosis-inducing protein 1 (TP53AIP1) from Homo sapiens (Human).